Consider the following 219-residue polypeptide: MSLASIPSSSPVASPYFRCRTYIFSFSSSPLCLYFPRGDSTSLRPRVRALRTESDGAKIGNSESYGSELLRRPRIASEESSEEEEEEEEENSEGDEFVDWEDKILEVTVPLVGFVRMILHSGKYANRDRLSPEHERTIIEMLLPYHPECEKKIGCGIDYIMVGHHPDFESSRCMFIVRKDGEVVDFSYWKCIKGLIKKKYPLYADSFILRHFRKRRQNR.

The N-terminal 48 residues, 1 to 48 (MSLASIPSSSPVASPYFRCRTYIFSFSSSPLCLYFPRGDSTSLRPRVR), are a transit peptide targeting the chloroplast. Residues 70-96 (LRRPRIASEESSEEEEEEEEENSEGDE) are disordered. Positions 79–96 (ESSEEEEEEEEENSEGDE) are enriched in acidic residues.

As to expression, expressed in leaves, stems, flowers and siliques.

Its subcellular location is the plastid. It is found in the chloroplast. Functionally, required for normal plastid function and plant development. Required for correct plastid ribosome assembly. Required for processing and maturation of 4.5S rRNA. This is Protein DCL homolog, chloroplastic from Arabidopsis thaliana (Mouse-ear cress).